Consider the following 253-residue polypeptide: PAXIP1-associated glutamate-rich protein 1A (253 aa).

2 disordered regions span residues 1–108 and 126–253; these read MSLA…MPPP and LQAE…QRKY. The span at 45-66 shows a compositional bias: basic and acidic residues; the sequence is KAEEEGKGSQEEAGREGSRPEE. A sufficient for interaction with NCOA1 region spans residues 115–159; sequence YELLATQGTLELQAEILPRRPPTPEAQSEEERSDEEPEAKEEEEE. Position 137 is a phosphothreonine (threonine 137). A compositionally biased stretch (acidic residues) spans 141–158; it reads QSEEERSDEEPEAKEEEE. Phosphoserine occurs at positions 142 and 147. The sufficient for interaction with ESR1 stretch occupies residues 160-253; sequence KPHMPTEFDF…NSLFPRQRKY (94 aa). The span at 194–222 shows a compositional bias: basic and acidic residues; it reads QKREARLDKVLSDMKRHKKLEEQILRTGR. Serine 236 bears the Phosphoserine mark. Residues 238–247 show a composition bias toward polar residues; it reads PLRSSGNSLF.

Component of the KMT2 family MLL2/MLL3 complex, at least composed of the histone methyltransferases KMT2D and/or KMT2C, the common subunits ASH2L, RBBP5, WDR5 and DPY30, and the complex type-specific subunits PAXIP1/PTIP, PAGR1, NCOA6 and KDM6A; PAXIP1 is required for the association with the MLL2/MLL3 complex. Forms a constitutive complex with PAXIP1/PTIP independently of the MLL2/MLL3 complex. Interacts with NCOA1, ESR1, NR3C1, AR.

Its subcellular location is the nucleus. Functionally, its association with the histone methyltransferase MLL2/MLL3 complex is suggesting a role in epigenetic transcriptional activation. However, in association with PAXIP1/PTIP is proposed to function at least in part independently of the MLL2/MLL3 complex. Proposed to be recruited by PAXIP1 to sites of DNA damage where the PAGR1:PAXIP1 complex is required for cell survival in response to DNA damage independently of the MLL2/MLL3 complex. However, its function in DNA damage has been questioned. During immunoglobulin class switching in activated B-cells is involved in transcription regulation of downstream switch regions at the immunoglobulin heavy-chain (Igh) locus independently of the MLL2/MLL3 complex. Involved in both estrogen receptor-regulated gene transcription and estrogen-stimulated G1/S cell-cycle transition. Acts as a transcriptional cofactor for nuclear hormone receptors. Inhibits the induction properties of several steroid receptors such as NR3C1, AR and PPARG; the mechanism of inhibition appears to be gene-dependent. May be involved in the regulation of the BMP pathway in extraembryonic development. This chain is PAXIP1-associated glutamate-rich protein 1A, found in Mus musculus (Mouse).